The primary structure comprises 479 residues: Ribosomal RNA small subunit methyltransferase F (479 aa).

Residues 125–131 (AAAPGSK), E149, D176, and D194 each bind S-adenosyl-L-methionine. Residue C247 is the Nucleophile of the active site.

The protein belongs to the class I-like SAM-binding methyltransferase superfamily. RsmB/NOP family.

It is found in the cytoplasm. It catalyses the reaction cytidine(1407) in 16S rRNA + S-adenosyl-L-methionine = 5-methylcytidine(1407) in 16S rRNA + S-adenosyl-L-homocysteine + H(+). In terms of biological role, specifically methylates the cytosine at position 1407 (m5C1407) of 16S rRNA. The polypeptide is Ribosomal RNA small subunit methyltransferase F (Escherichia fergusonii (strain ATCC 35469 / DSM 13698 / CCUG 18766 / IAM 14443 / JCM 21226 / LMG 7866 / NBRC 102419 / NCTC 12128 / CDC 0568-73)).